The primary structure comprises 230 residues: Phosphoribosylaminoimidazole-succinocarboxamide synthase (230 aa).

It belongs to the SAICAR synthetase family.

It carries out the reaction 5-amino-1-(5-phospho-D-ribosyl)imidazole-4-carboxylate + L-aspartate + ATP = (2S)-2-[5-amino-1-(5-phospho-beta-D-ribosyl)imidazole-4-carboxamido]succinate + ADP + phosphate + 2 H(+). Its pathway is purine metabolism; IMP biosynthesis via de novo pathway; 5-amino-1-(5-phospho-D-ribosyl)imidazole-4-carboxamide from 5-amino-1-(5-phospho-D-ribosyl)imidazole-4-carboxylate: step 1/2. This chain is Phosphoribosylaminoimidazole-succinocarboxamide synthase, found in Thermotoga petrophila (strain ATCC BAA-488 / DSM 13995 / JCM 10881 / RKU-1).